The primary structure comprises 833 residues: Prickle-like protein 1 (833 aa).

The segment at 1–22 (MPLEMDQKISKHTFGCQRSSTS) is disordered. Residues 14–122 (FGCQRSSTSD…NIKMLSRAVM (109 aa)) enclose the PET domain. 3 consecutive LIM zinc-binding domains span residues 124-188 (AMCE…ELLK), 189-249 (PRCS…HYAE), and 250-313 (YCES…EDVH). 5 disordered regions span residues 312–346 (VHAS…ADQC), 432–456 (EDNR…RNSR), 603–702 (CQEK…ERNP), 767–786 (CSSS…QPIP), and 805–833 (NALS…CIIS). Composition is skewed to basic and acidic residues over residues 432 to 453 (EDNR…DLQR) and 603 to 614 (CQEKPPPEEKPM). Residues 669-680 (RPHHHRRRKSRK) are compositionally biased toward basic residues. Residues 817-833 (TKSKKKKGHKGKNCIIS) are compositionally biased toward basic residues. Cys830 is modified (cysteine methyl ester). Cys830 is lipidated: S-farnesyl cysteine. Residues 831–833 (IIS) constitute a propeptide, removed in mature form.

The protein belongs to the prickle / espinas / testin family. In terms of assembly, interacts with dvl2/dsh and mapk8/jnk1.

Its subcellular location is the cell membrane. Acts in a planar cell polarity (PCP) complex; polarization along the apical/basal axis of epithelial cells. Regulates the polarized assembly of fibronectrin on the surface of the mesoderm during gastrulation. Essential for gastrulation cell movements, cooperating with dvl2/dsh to activate jnk. Acts together with tes to control axial elongation. The chain is Prickle-like protein 1 from Xenopus tropicalis (Western clawed frog).